A 77-amino-acid chain; its full sequence is Spermatid-specific protein T2 (77 aa).

Residues 1-21 (MKVAANTSKMLVEKLDLLKGG) form a hydrophobic region. Residues 1–77 (MKVAANTSKM…YSRRRYRRRR (77 aa)) are disordered. Over residues 20 to 77 (GGRRRRRRSRRRRRSRRRRSRSPYRRRYRRRRRRRRSRRRRRYRRRRSYSRRRYRRRR) the composition is skewed to basic residues.

Phosphorylation occurs at different degrees. The triphosphorylated form may be predominant in T2. SP2 appears to be phosphorylated in elongated spermatids, but dephosphorylated in mature sperm cells. In terms of tissue distribution, testis.

The protein localises to the nucleus. It localises to the chromosome. Functionally, cuttlefish spermiogenesis is characterized by a double nuclear protein transition: histones -&gt; spermatid-specific proteins (T1/T2) -&gt; protamines (SP1/SP2). The protamines compact sperm DNA into a highly condensed, stable and inactive complex. This Sepia officinalis (Common cuttlefish) protein is Spermatid-specific protein T2.